The chain runs to 520 residues: Putative cytochrome P450 CYP13A3 (520 aa).

Residue C464 participates in heme binding.

Belongs to the cytochrome P450 family. Heme serves as cofactor.

Its function is as follows. Cytochromes P450 are a group of heme-thiolate monooxygenases. They oxidize a variety of structurally unrelated compounds, including steroids, fatty acids, and xenobiotics. In Caenorhabditis elegans, this protein is Putative cytochrome P450 CYP13A3 (cyp-13A3).